The chain runs to 1145 residues: Cellulose synthase-like protein D3 (1145 aa).

The segment covering 1–19 (MASNNHFMNSRSNLSTNSD) has biased composition (polar residues). 2 disordered regions span residues 1 to 38 (MASNNHFMNSRSNLSTNSDAAEAERHQQPVSNSVTFAR) and 189 to 208 (DNNKQQRPMLPPPAGGSKMD). The next 2 helical transmembrane spans lie at 289-309 (VISPYRLLILIRIVVLALFLM) and 319-339 (AIWLWGMSVVCELWFALSWLL). Residue D419 is part of the active site. S755 bears the Phosphoserine mark. D848 is a catalytic residue. A run of 6 helical transmembrane segments spans residues 930–950 (FFLIVYCFLPALSLFSGQFIV), 956–976 (TFLVYLLIISITLCLLALLEI), 1002–1022 (LAAVIQGLLKVVAGIEISFTL), 1045–1065 (SLMIPPITIMMVNLIAIAVGF), 1079–1099 (LIGGVFFSFWVLAHLYPFAKG), and 1109–1129 (TIVYVWSGLVAITISLLWVAI).

This sequence belongs to the glycosyltransferase 2 family. Plant cellulose synthase-like D subfamily. Preferentially expressed in root hair cells. Expressed in roots, leaves, stems, flowers and siliques.

It is found in the golgi apparatus membrane. Its function is as follows. Thought to be a Golgi-localized beta-glycan synthase that polymerize the backbones of noncellulosic polysaccharides (hemicelluloses) of plant cell wall. Required for synthesis of a cell wall polysaccharide essential for root hair elongation, but not initiation. May be the functional ortholog of rice CSLD1. The polypeptide is Cellulose synthase-like protein D3 (CSLD3) (Arabidopsis thaliana (Mouse-ear cress)).